The chain runs to 62 residues: Potassium channel toxin alpha-KTx Tx773 (62 aa).

Positions 1-18 are cleaved as a signal peptide; the sequence is MQKLFIVLLLFCILRLDA. 3 disulfides stabilise this stretch: cysteine 28/cysteine 46, cysteine 33/cysteine 59, and cysteine 37/cysteine 61.

Belongs to the short scorpion toxin superfamily. Potassium channel inhibitor family. Alpha-KTx 23 subfamily. In terms of tissue distribution, expressed by the venom gland.

The protein localises to the secreted. Its function is as follows. May block potassium channels. This is Potassium channel toxin alpha-KTx Tx773 from Buthus israelis (Israeli scorpion).